The chain runs to 135 residues: Large ribosomal subunit protein uL18 (135 aa).

Residues 1–23 are disordered; it reads MSQTANQKAKRIPLGKDASTKRR.

This sequence belongs to the universal ribosomal protein uL18 family. In terms of assembly, part of the 50S ribosomal subunit; part of the 5S rRNA/L5/L18/L25 subcomplex. Contacts the 5S and 23S rRNAs.

Functionally, this is one of the proteins that bind and probably mediate the attachment of the 5S RNA into the large ribosomal subunit, where it forms part of the central protuberance. The protein is Large ribosomal subunit protein uL18 of Rhodococcus jostii (strain RHA1).